The following is a 138-amino-acid chain: Transcription antitermination protein NusB (138 aa).

This sequence belongs to the NusB family.

In terms of biological role, involved in transcription antitermination. Required for transcription of ribosomal RNA (rRNA) genes. Binds specifically to the boxA antiterminator sequence of the ribosomal RNA (rrn) operons. In Helicobacter acinonychis (strain Sheeba), this protein is Transcription antitermination protein NusB.